An 86-amino-acid chain; its full sequence is Kappa-theraphotoxin-Cg1a 6 (86 aa).

An N-terminal signal peptide occupies residues 1–21 (MKVSVLITLAVLGVMFVWASA). The propeptide occupies 22–50 (AELEERGSDQRDSPAWLKSMERIFQSEER). 3 cysteine pairs are disulfide-bonded: C52-C66, C59-C71, and C65-C78. F84 is subject to Phenylalanine amide.

It belongs to the neurotoxin 10 (Hwtx-1) family. 28 (Jztx-11) subfamily. In terms of tissue distribution, expressed by the venom gland.

It is found in the secreted. This toxin acts as a voltage-dependent gating-modifier. It inhibits the sodium conductance (IC(50)=124 nM) and slows the fast inactivation (EC(50)=1180 nM) of Nav1.5/SCN5A. It significantly shifts the activation to more depolarized voltages and decreases the deactivation of Nav1.5 currents upon extreme depolarization, but only slightly affects voltage-dependence of steady-state inactivation. In addition, this toxin causes an approximately five-fold decrease in the rate of recovery from inactivation and an approximately 1.9-fold reduction in the closed-state inactivation rate. This toxin integrates the functions of site 3 toxins (alpha-scorpion toxins) with site 4 toxins (beta-scorpion and spider toxins) by targeting multiple sites on Nav1.5. Also shows inhibition of voltage-gated potassium channels (5 uM completely inhibits Kv2.1/KCNB1, whereas 5 uM moderately inhibits Kv4.2/KCND2 Kv4.1/KCND1 channels). The sequence is that of Kappa-theraphotoxin-Cg1a 6 from Chilobrachys guangxiensis (Chinese earth tiger tarantula).